The following is a 533-amino-acid chain: Multicopper oxidase CueO (533 aa).

A signal peptide (tat-type signal) is located at residues 1 to 28; the sequence is MHRRDFLKLTAALGAATSLPLWSRAALA. Plastocyanin-like domains lie at 53 to 166, 221 to 290, and 416 to 532; these read QTGS…IDDS, PYPQ…DTRD, and AFNF…FTVS. Positions 102, 104, 142, and 144 each coordinate Cu cation. Residues His458, His461, His463, His514, Cys515, His516, and His520 each contribute to the Cu cation site.

The protein belongs to the multicopper oxidase family. Monomer. The cofactor is Cu cation. In terms of processing, predicted to be exported by the Tat system. The position of the signal peptide cleavage has not been experimentally proven.

Its subcellular location is the periplasm. The enzyme catalyses 4 Cu(+) + O2 + 4 H(+) = 4 Cu(2+) + 2 H2O. Multicopper oxidase involved in copper homeostasis and copper tolerance under aerobic conditions. Is responsible for the oxidation of Cu(+) to the less harmful Cu(2+) in the periplasm, thereby preventing Cu(+) from entering the cytoplasm. This chain is Multicopper oxidase CueO (cueO), found in Yersinia pestis.